We begin with the raw amino-acid sequence, 150 residues long: AN1-type zinc finger protein TMC1 (150 aa).

A disordered region spans residues 1-82 (MSDINEIEIP…TKKTTKKKKK (82 aa)). Residue Ser2 is modified to N-acetylserine. The span at 23–33 (DPMHEIEDKST) shows a compositional bias: basic and acidic residues. Phosphoserine is present on residues Ser43 and Ser54. The span at 53–70 (NSRSSSNSSVTSTGQSSR) shows a compositional bias: low complexity. Residues 71 to 82 (RVTKKTTKKKKK) show a composition bias toward basic residues. Residues 79-128 (KKKKNACYFDTCSSAASKFIGDCNFCKGHFCSKHRLMENHACNGLTSCKE) form an AN1-type zinc finger. The Zn(2+) site is built by Cys85, Cys90, Cys101, Cys104, Cys109, His112, His118, and Cys120.

Its subcellular location is the nucleus. In terms of biological role, may have a role in protecting cells from metalloid-induced proteotoxicity. The chain is AN1-type zinc finger protein TMC1 from Saccharomyces cerevisiae (strain ATCC 204508 / S288c) (Baker's yeast).